The sequence spans 1076 residues: Nucleoporin NUP1 (1076 aa).

Residues 1-11 show a composition bias toward low complexity; it reads MSSNTSSVMSS. Positions 1 to 39 are disordered; that stretch reads MSSNTSSVMSSPRVEKRSFSSTLKSFFTNPNKKRPSSKK. Serine 2 is subject to N-acetylserine. Residues 19 to 30 show a composition bias toward polar residues; sequence FSSTLKSFFTNP. 2 positions are modified to phosphoserine: serine 54 and serine 161. 2 disordered regions span residues 143–183 and 224–260; these read SQSK…TNVG and KKDN…ATGP. 2 stretches are compositionally biased toward polar residues: residues 154 to 170 and 243 to 260; these read LCTS…SCTR and NRNN…ATGP. Residues 336–338 form an FXF 1 repeat; it reads FDF. A Phosphothreonine modification is found at threonine 381. Serine 383 bears the Phosphoserine mark. The FXF 2 repeat unit spans residues 384–386; sequence FNF. Positions 403–518 are disordered; that stretch reads TTLFNFGGKS…SFVFGASDKQ (116 aa). 2 FXFG repeats span residues 406 to 409 and 422 to 425; these read FNFG and FKFG. Residues 426–439 are compositionally biased toward basic and acidic residues; it reads KTSEKSENHTESDA. 2 FXFG repeats span residues 448-451 and 484-487; these read FSFG and FDFG. Residues 488 to 505 show a composition bias toward basic and acidic residues; the sequence is KTGDQKETKKGESEKDAS. FXFG repeat units lie at residues 510–513, 525–528, 543–546, and 571–574; these read FVFG and FTFG. Positions 548-743 are disordered; that stretch reads AATAKETHTK…SMKSTASTAA (196 aa). FXF repeat units follow at residues 591 to 593, 614 to 616, 636 to 638, and 657 to 659; these read FSF and FTF. Polar residues-rich tracts occupy residues 634 to 649 and 658 to 667; these read PTFS…SSVV and TFASSKTSQP. Serine 637 bears the Phosphoserine mark. One copy of the FXFG 9 repeat lies at 671–674; it reads FSFG. The FXF 7 repeat unit spans residues 689-691; the sequence is FSF. 2 FXFG repeats span residues 708-711 and 727-730; these read FTFG and FSFG. Over residues 708-723 the composition is skewed to low complexity; sequence FTFGGSTTNNTTTTST. Residues 753-755 form an FXF 8 repeat; that stretch reads FSF. Residues 800 to 803 form an FXFG 12 repeat; that stretch reads FSFG. FXF repeat units lie at residues 819 to 821 and 866 to 868; these read FSF and FGF. One copy of the FXFG 13 repeat lies at 885-888; it reads FNFG. The FXF 11 repeat unit spans residues 929-931; that stretch reads FNF. Residues 940–979 are disordered; sequence GGSVFNMNGNTNANTVFAGSNNQPHQSQTPSFNTNSSFTP. Positions 944–964 are enriched in polar residues; it reads FNMNGNTNANTVFAGSNNQPH. Over residues 965 to 979 the composition is skewed to low complexity; that stretch reads QSQTPSFNTNSSFTP. FG repeat units follow at residues 1008–1009, 1027–1028, and 1038–1039; these read FG. A disordered region spans residues 1025 to 1054; that stretch reads SIFGGAGGVPTTSFGQPQSAPNQMGMGTNN. Residues 1034–1045 are compositionally biased toward polar residues; sequence PTTSFGQPQSAP. The interval 1040 to 1076 is interaction with KAP95; that stretch reads QPQSAPNQMGMGTNNGMSMGGGVMANRKIARMRHSKR.

Component of the nuclear pore complex (NPC). NPC constitutes the exclusive means of nucleocytoplasmic transport. NPCs allow the passive diffusion of ions and small molecules and the active, nuclear transport receptor-mediated bidirectional transport of macromolecules such as proteins, RNAs, ribonucleoparticles (RNPs), and ribosomal subunits across the nuclear envelope. Due to its 8-fold rotational symmetry, all subunits are present with 8 copies or multiples thereof. Interacts through its FG repeats with nuclear transport receptors. Binds to the nuclear basket of the NPC through NUP60. Interacts with KAP122. Post-translationally, phosphorylated by CDC28.

It is found in the nucleus. Its subcellular location is the nuclear pore complex. The protein resides in the nucleus membrane. Functions as a component of the nuclear pore complex (NPC). NPC components, collectively referred to as nucleoporins (NUPs), can play the role of both NPC structural components and of docking or interaction partners for transiently associated nuclear transport factors. Active directional transport is assured by both, a Phe-Gly (FG) repeat affinity gradient for these transport factors across the NPC and a transport cofactor concentration gradient across the nuclear envelope (GSP1 and GSP2 GTPases associated predominantly with GTP in the nucleus, with GDP in the cytoplasm). As one of the FG repeat nucleoporins NUP1 is involved in interactions with and guidance of nuclear transport receptors such as SRP1-KAP95 (importin alpha and beta) through the NPC. Like the closely related NUP2 it also plays an important role in disassembling and recycling SRP1-KAP95 to the cytoplasm after nuclear import. Upon entry of the heterotrimeric SRP1-KAP95-cargo complex in the nucleus, NUP1 binds through its C-terminus to KAP95, thus accelerating the release of KAP95 and, indirectly, of the nuclear localization signal (NLS)-containing cargo from the SRP1-KAP95-cargo complex. The protein is Nucleoporin NUP1 (NUP1) of Saccharomyces cerevisiae (strain ATCC 204508 / S288c) (Baker's yeast).